We begin with the raw amino-acid sequence, 414 residues long: Serine/threonine transporter SstT (414 aa).

8 consecutive transmembrane segments (helical) span residues 16-36 (GSLV…AWIS), 46-66 (LGTL…LMLV), 84-104 (ILFL…VFSF), 143-163 (ALLN…GFAL), 180-200 (AVTF…FGLV), 219-239 (LVVL…LLVF), 300-320 (MAGA…TLGV), and 332-352 (VVAS…LLLI).

Belongs to the dicarboxylate/amino acid:cation symporter (DAACS) (TC 2.A.23) family.

It is found in the cell inner membrane. The enzyme catalyses L-serine(in) + Na(+)(in) = L-serine(out) + Na(+)(out). The catalysed reaction is L-threonine(in) + Na(+)(in) = L-threonine(out) + Na(+)(out). Involved in the import of serine and threonine into the cell, with the concomitant import of sodium (symport system). This is Serine/threonine transporter SstT from Salmonella schwarzengrund (strain CVM19633).